Reading from the N-terminus, the 198-residue chain is MHYPEPISKLINSFMKLPGIGPKTAQRLAFHTLDMKEDDVVQFAKALVDVKRELTYCSVCGHITENDPCYICEDKQRDRSVICVVEDDKDVIAMEKMREYKGLYHVLHGSISPMDGIGPEDINIPSLIERLKNDEVSELILAMNPNLEGESTAMYISRLVKPIGIKVTRLAQGLSVGGDLEYADEVTLSKAIAGRTEM.

The segment at 57 to 72 adopts a C4-type zinc-finger fold; sequence CSVCGHITENDPCYIC. The 96-residue stretch at 80-175 folds into the Toprim domain; the sequence is SVICVVEDDK…KVTRLAQGLS (96 aa).

This sequence belongs to the RecR family.

In terms of biological role, may play a role in DNA repair. It seems to be involved in an RecBC-independent recombinational process of DNA repair. It may act with RecF and RecO. The sequence is that of Recombination protein RecR from Staphylococcus aureus (strain MRSA252).